Consider the following 315-residue polypeptide: MTSKSTFVLGHRHLLGIEGLSAADITGLLDLSEEYVELNRQVDKKRTVLRGRTQVNLFFEASTRTQSSFELAGKRLGADVMNMSVSSSSIKKGETLVDTAMTLNAMHPDILVVRHHASGAVELLARKVDGSVINAGDGAHEHPTQALLDALTIRRNKGRIEGLVVAICGDVLHSRVARSNIILLNTMGARVRVVGPSTLLPPGIERMGVEVARDMREGLNGADIVMMLRLQRERMNGSFVPSTSEYFNYFGLDQKKLGYAKPDALVMHPGPMNRGVEIDTAVADGAQSLIREQVEMGVAVRMAVLEALARNLPNA.

The carbamoyl phosphate site is built by R64 and T65. Residue K92 participates in L-aspartate binding. R114, H142, and Q145 together coordinate carbamoyl phosphate. L-aspartate is bound by residues R175 and R229. Carbamoyl phosphate-binding residues include G270 and P271.

This sequence belongs to the aspartate/ornithine carbamoyltransferase superfamily. ATCase family. In terms of assembly, heterododecamer (2C3:3R2) of six catalytic PyrB chains organized as two trimers (C3), and six regulatory PyrI chains organized as three dimers (R2).

It carries out the reaction carbamoyl phosphate + L-aspartate = N-carbamoyl-L-aspartate + phosphate + H(+). The protein operates within pyrimidine metabolism; UMP biosynthesis via de novo pathway; (S)-dihydroorotate from bicarbonate: step 2/3. Its function is as follows. Catalyzes the condensation of carbamoyl phosphate and aspartate to form carbamoyl aspartate and inorganic phosphate, the committed step in the de novo pyrimidine nucleotide biosynthesis pathway. The polypeptide is Aspartate carbamoyltransferase catalytic subunit (Bradyrhizobium diazoefficiens (strain JCM 10833 / BCRC 13528 / IAM 13628 / NBRC 14792 / USDA 110)).